Reading from the N-terminus, the 200-residue chain is Small ribosomal subunit protein eS8A (200 aa).

Disordered regions lie at residues 1-40 and 123-145; these read MGITRDSRHKRSATGAKRAQYRKKRKFELGRQPSNTRIGP and SKGKKATSTPNPKSKHVQRKHSA. Residues 135–145 show a composition bias toward basic residues; sequence KSKHVQRKHSA.

This sequence belongs to the eukaryotic ribosomal protein eS8 family. In terms of assembly, component of the small ribosomal subunit (SSU). Mature yeast ribosomes consist of a small (40S) and a large (60S) subunit. The 40S small subunit contains 1 molecule of ribosomal RNA (18S rRNA) and at least 33 different proteins. The large 60S subunit contains 3 rRNA molecules (25S, 5.8S and 5S rRNA) and at least 46 different proteins.

It localises to the cytoplasm. Its function is as follows. Component of the ribosome, a large ribonucleoprotein complex responsible for the synthesis of proteins in the cell. The small ribosomal subunit (SSU) binds messenger RNAs (mRNAs) and translates the encoded message by selecting cognate aminoacyl-transfer RNA (tRNA) molecules. The large subunit (LSU) contains the ribosomal catalytic site termed the peptidyl transferase center (PTC), which catalyzes the formation of peptide bonds, thereby polymerizing the amino acids delivered by tRNAs into a polypeptide chain. The nascent polypeptides leave the ribosome through a tunnel in the LSU and interact with protein factors that function in enzymatic processing, targeting, and the membrane insertion of nascent chains at the exit of the ribosomal tunnel. This chain is Small ribosomal subunit protein eS8A (rps801), found in Schizosaccharomyces pombe (strain 972 / ATCC 24843) (Fission yeast).